The primary structure comprises 425 residues: D-amino acid dehydrogenase 2 (425 aa).

FAD is bound at residue 3–17; sequence ITVVGAGIVGISTAY.

It belongs to the DadA oxidoreductase family. The cofactor is FAD.

The enzyme catalyses a D-alpha-amino acid + A + H2O = a 2-oxocarboxylate + AH2 + NH4(+). Its function is as follows. Oxidative deamination of D-amino acids. This chain is D-amino acid dehydrogenase 2 (dadA2), found in Ralstonia nicotianae (strain ATCC BAA-1114 / GMI1000) (Ralstonia solanacearum).